Here is a 55-residue protein sequence, read N- to C-terminus: Large ribosomal subunit protein bL33 (55 aa).

This sequence belongs to the bacterial ribosomal protein bL33 family.

The polypeptide is Large ribosomal subunit protein bL33 (Hyphomonas neptunium (strain ATCC 15444)).